Here is a 172-residue protein sequence, read N- to C-terminus: MTEAVSNFEAPPMSRRVLLNALLSGSVGVVVVGALYPVVKYFIPPSAGGGGEGLIAQDALGKPISVSELLATHAATDRVLAQGLKGDPTYIVIDNGAVANYGLNAVCTHLGCVVPWNVGENLFKCPCHGSQYAANGKVIRGPAPRSLELVSATVDGDNVRFSPWQGPDFRET.

Residues Leu-19–Val-39 traverse the membrane as a helical segment. In terms of domain architecture, Rieske spans Gly-61 to Phe-161. Residues Cys-107, His-109, Cys-125, and His-128 each coordinate [2Fe-2S] cluster. Cysteines 112 and 127 form a disulfide.

Belongs to the Rieske iron-sulfur protein family. As to quaternary structure, the 4 large subunits of the cytochrome b6-f complex are cytochrome b6, subunit IV (17 kDa polypeptide, PetD), cytochrome f and the Rieske protein, while the 4 small subunits are PetG, PetL, PetM and PetN. The complex functions as a dimer. [2Fe-2S] cluster is required as a cofactor.

It localises to the cellular thylakoid membrane. It carries out the reaction 2 oxidized [plastocyanin] + a plastoquinol + 2 H(+)(in) = 2 reduced [plastocyanin] + a plastoquinone + 4 H(+)(out). Component of the cytochrome b6-f complex, which mediates electron transfer between photosystem II (PSII) and photosystem I (PSI), cyclic electron flow around PSI, and state transitions. This is Cytochrome b6-f complex iron-sulfur subunit from Synechococcus sp. (strain JA-2-3B'a(2-13)) (Cyanobacteria bacterium Yellowstone B-Prime).